A 308-amino-acid polypeptide reads, in one-letter code: uncharacterized protein (308 aa).

This is an uncharacterized protein from Acanthamoeba polyphaga (Amoeba).